We begin with the raw amino-acid sequence, 326 residues long: Small ribosomal subunit protein RACK1x (326 aa).

WD repeat units follow at residues 13–53 (AHTD…KSYG), 61–100 (GHSHFVEDVVLSSDGQFALSGSWDGELRLWDLATGETTRR), 103–142 (GHTKDVLSVAFSTDNRQIVSASRDRTIKLWNTLGECKYTI), 147–188 (GHKE…LRNS), 191–230 (GHSGYLNTVAVSPDGSLCASGGKDGVILLWDLAEGKKLYS), 232–270 (EAGSIIHSLCFSPNRYWLCAATENSIRIWDLESKSVVED), and 290–326 (NQKKVIYCTSLNWSADGSTLFSGYTDGVVRVWGIGRY).

It belongs to the WD repeat G protein beta family. Ribosomal protein RACK1 subfamily. In terms of assembly, homodimer and heterodimer with RACK1A or RACK1B. Interacts with GB1, MEKK1, MKK4, MKK5, MPK3 and MPK6, but not with GPA1 or MPK4. In terms of tissue distribution, widely expressed.

Functionally, minor component of the RACK1 regulatory proteins that play a role in multiple signal transduction pathways. Involved in multiple hormone responses and developmental processes. MAPK cascade scaffolding protein involved in the protease IV and ArgC signaling pathway but not the flg22 pathway. The polypeptide is Small ribosomal subunit protein RACK1x (Arabidopsis thaliana (Mouse-ear cress)).